Consider the following 223-residue polypeptide: Probable 3-beta-hydroxysteroid-Delta(8),Delta(7)-isomerase (223 aa).

The next 4 helical transmembrane spans lie at 28-48, 58-78, 115-135, and 175-195; these read IVSI…LLFG, LMCW…YFVF, VEGI…YAIA, and FYYY…PSLI. The EXPERA domain maps to 54-196; the sequence is LDKLLMCWWT…WWVLIPSLIS (143 aa).

Belongs to the EBP family.

The protein localises to the endoplasmic reticulum membrane. It carries out the reaction lathosterol = 5alpha-cholest-8-en-3beta-ol. It participates in steroid biosynthesis; sterol biosynthesis. Functionally, catalyzes the conversion of Delta(8)-sterols to their corresponding Delta(7)-isomers. This chain is Probable 3-beta-hydroxysteroid-Delta(8),Delta(7)-isomerase, found in Arabidopsis thaliana (Mouse-ear cress).